A 224-amino-acid polypeptide reads, in one-letter code: Large ribosomal subunit protein uL4 (224 aa).

A disordered region spans residues 54-73; that stretch reads NRSEVSHSTKKPFRQKGTGN.

The protein belongs to the universal ribosomal protein uL4 family. As to quaternary structure, part of the 50S ribosomal subunit.

One of the primary rRNA binding proteins, this protein initially binds near the 5'-end of the 23S rRNA. It is important during the early stages of 50S assembly. It makes multiple contacts with different domains of the 23S rRNA in the assembled 50S subunit and ribosome. In terms of biological role, forms part of the polypeptide exit tunnel. This Chlamydia felis (strain Fe/C-56) (Chlamydophila felis) protein is Large ribosomal subunit protein uL4.